Consider the following 438-residue polypeptide: MPCTCTWRNWRQWIRPLAVVLYLLSIVVAVPLCVWELQKLEVGIHTKAWFIAGIFLLLTIPISLWVILQHLVHYTQPELQKPIIRILWMVPIYSLDSWIALKYPSIAIYVDTCRECYEAYVIYNFMGFLTNYLTNRYPNLVLIIEAKDQQKHFPPLCCCPPWTMGEVLLFRCKLGVLQYTVVRPFTTIIALVCELLDIYDEGNFSFSNAWTYLVIINNMSQLFAMYCLLLFYKVLKEELSPIQPVGKFLCVKLVVFVSFWQAVVIALLVKVGVISEKHTWEWQTVEAVATGLQDFIICIEMFLAAIAHHYTFSYKPYVQEAEEGSCFDSFLAMWDVSDIRDDISEQVRHVGRTVMGHPRKKFFPEDQDQNEHTSLLSSSSQDALSVASSVPPSPVGHYQGFGHTVTPQTTPTTANASDDTGNDAAGVREEPSEKPVAS.

The next 7 membrane-spanning stretches (helical) occupy residues 17 to 37 (LAVV…VWEL), 48 to 68 (AWFI…WVIL), 86 to 106 (ILWM…YPSI), 176 to 196 (VLQY…CELL), 212 to 232 (YLVI…LLFY), 254 to 274 (VVFV…VGVI), and 287 to 307 (AVAT…AAIA). The interval 358 to 438 (PRKKFFPEDQ…EEPSEKPVAS (81 aa)) is disordered. 2 stretches are compositionally biased toward low complexity: residues 374–390 (SLLS…ASSV) and 404–413 (TVTPQTTPTT). Residues 426-438 (GVREEPSEKPVAS) are compositionally biased toward basic and acidic residues.

It belongs to the TMEM184 family.

The protein resides in the membrane. Functionally, possible tumor suppressor which may play a role in cell growth. The polypeptide is Transmembrane protein 184C (TMEM184C) (Bos taurus (Bovine)).